We begin with the raw amino-acid sequence, 204 residues long: Ras-related and estrogen-regulated growth inhibitor-like protein (204 aa).

Residues 1–204 (MNDVKLTVLG…NVFGKRRKSV (204 aa)) are small GTPase-like. GTP contacts are provided by residues 10–17 (GGEGTGKS), 57–63 (DPCSQPQ), and 122–125 (NKQD).

The protein belongs to the small GTPase superfamily. Ras family.

It catalyses the reaction GTP + H2O = GDP + phosphate + H(+). Binds GDP/GTP and may possess intrinsic GTPase activity. The protein is Ras-related and estrogen-regulated growth inhibitor-like protein (RERGL) of Bos taurus (Bovine).